Consider the following 413-residue polypeptide: Tyrosine--tRNA ligase (413 aa).

Residues 59-68 (PTAPDIHLGH) carry the 'HIGH' region motif. Positions 243–247 (KMSKS) match the 'KMSKS' region motif. K246 provides a ligand contact to ATP. An S4 RNA-binding domain is found at 351 to 411 (LAIGQLLKQA…GKRRFARVTL (61 aa)).

It belongs to the class-I aminoacyl-tRNA synthetase family. TyrS type 2 subfamily. As to quaternary structure, homodimer.

Its subcellular location is the cytoplasm. The enzyme catalyses tRNA(Tyr) + L-tyrosine + ATP = L-tyrosyl-tRNA(Tyr) + AMP + diphosphate + H(+). In terms of biological role, catalyzes the attachment of tyrosine to tRNA(Tyr) in a two-step reaction: tyrosine is first activated by ATP to form Tyr-AMP and then transferred to the acceptor end of tRNA(Tyr). This Burkholderia pseudomallei (strain K96243) protein is Tyrosine--tRNA ligase.